The chain runs to 367 residues: Aurora kinase (367 aa).

Polar residues-rich tracts occupy residues methionine 1–isoleucine 29 and histidine 37–isoleucine 48. The disordered stretch occupies residues methionine 1–valine 52. A Phosphoserine; by autocatalysis modification is found at serine 5. Phosphoserine is present on serine 76. Positions phenylalanine 104 to isoleucine 355 constitute a Protein kinase domain. Residues leucine 110–valine 118 and lysine 133 contribute to the ATP site. Aspartate 227 acts as the Proton acceptor in catalysis. Phosphothreonine; by autocatalysis is present on threonine 260.

It belongs to the protein kinase superfamily. Ser/Thr protein kinase family. Aurora subfamily. Component of the CPC complex at least composed of IPL1, BIR1 and SLI15.

It localises to the nucleus. It is found in the cytoplasm. Its subcellular location is the cytoskeleton. The protein resides in the spindle. The protein localises to the chromosome. It localises to the centromere. It is found in the kinetochore. The catalysed reaction is L-seryl-[protein] + ATP = O-phospho-L-seryl-[protein] + ADP + H(+). The enzyme catalyses L-threonyl-[protein] + ATP = O-phospho-L-threonyl-[protein] + ADP + H(+). Its function is as follows. Component of the chromosomal passenger complex (CPC), a complex that acts as a key regulator of chromosome segregation and cytokinesis. Has a role in error-correction of aberrent kinetochore-microtubule attachments to ensure that sister kinetochores become bioriented and connect to opposite poles by promoting spindle assembly checkpoint signaling. Acts in opposition to the phosphatase PP1. Not required for kinetochore detachment from microtubules during replication of centromeric DNA. Phosphorylates histone H3 to form H3S10ph during mitosis and meiosis. Phosphorylates CNN1, which contributes to the enrichment of CNN1 on anaphase kinetochores. Phosphorylates RGD1. This is Aurora kinase (IPL1) from Saccharomyces cerevisiae (strain ATCC 204508 / S288c) (Baker's yeast).